The chain runs to 161 residues: Small ribosomal subunit protein uS19 (161 aa).

The span at 1–19 (MARQKKYSGKGGARKKNKQ) shows a compositional bias: basic residues. The interval 1 to 26 (MARQKKYSGKGGARKKNKQKQSVAPR) is disordered.

This sequence belongs to the universal ribosomal protein uS19 family.

Its function is as follows. Protein S19 forms a complex with S13 that binds strongly to the 16S ribosomal RNA. In Methanococcus maripaludis (strain C7 / ATCC BAA-1331), this protein is Small ribosomal subunit protein uS19.